Reading from the N-terminus, the 139-residue chain is D-ribose pyranase (139 aa).

The active-site Proton donor is the histidine 20. Substrate-binding positions include aspartate 28, histidine 106, and 128 to 130; that span reads YAN.

It belongs to the RbsD / FucU family. RbsD subfamily. Homodecamer.

Its subcellular location is the cytoplasm. The enzyme catalyses beta-D-ribopyranose = beta-D-ribofuranose. The protein operates within carbohydrate metabolism; D-ribose degradation; D-ribose 5-phosphate from beta-D-ribopyranose: step 1/2. Functionally, catalyzes the interconversion of beta-pyran and beta-furan forms of D-ribose. This Enterobacter sp. (strain 638) protein is D-ribose pyranase.